Here is a 350-residue protein sequence, read N- to C-terminus: Guanine nucleotide-binding protein G(t) subunit alpha-1 (350 aa).

The interval 1 to 21 is disordered; the sequence is MGAGASAEEKHSRELEKKLKE. Gly-2 carries N-myristoyl glycine lipidation. A compositionally biased stretch (basic and acidic residues) spans 7–21; sequence AEEKHSRELEKKLKE. One can recognise a G-alpha domain in the interval 28–350; that stretch reads RTVKLLLLGA…KENLKDCGLF (323 aa). Residues 31–44 form a G1 motif region; the sequence is KLLLLGAGESGKST. Residue 36–43 coordinates GTP; the sequence is GAGESGKS. Ser-43 is a binding site for Mg(2+). Tyr-142 is subject to Phosphotyrosine. Residues Asp-146, 171–177, Gly-199, 265–268, and Ala-322 each bind GTP; these read LRSRVKT and NKKD. The interval 169–177 is G2 motif; that stretch reads DVLRSRVKT. Thr-177 contributes to the Mg(2+) binding site. The tract at residues 192–201 is G3 motif; the sequence is FRMFDVGGQR. The tract at residues 261-268 is G4 motif; the sequence is VLFLNKKD. Residues 320–325 form a G5 motif region; that stretch reads TCATDT. The interval 340–350 is interaction with RHO; sequence IKENLKDCGLF.

As to quaternary structure, heterotrimeric G proteins are composed of 3 subunits alpha, beta and gamma. The alpha chain contains the guanine nucleotide binding site. Interacts with RHO. Interacts with RGS9 and PDE6G. Interacts (when myristoylated) with UNC119; interaction is required for localization in sensory neurons. Rod.

The protein localises to the cell projection. It localises to the cilium. Its subcellular location is the photoreceptor outer segment. The protein resides in the membrane. It is found in the photoreceptor inner segment. Functionally, functions as a signal transducer for the rod photoreceptor RHO. Required for normal RHO-mediated light perception by the retina. Guanine nucleotide-binding proteins (G proteins) function as transducers downstream of G protein-coupled receptors (GPCRs), such as the photoreceptor RHO. The alpha chain contains the guanine nucleotide binding site and alternates between an active, GTP-bound state and an inactive, GDP-bound state. Activated RHO promotes GDP release and GTP binding. Signaling is mediated via downstream effector proteins, such as cGMP-phosphodiesterase. The chain is Guanine nucleotide-binding protein G(t) subunit alpha-1 (GNAT1) from Bos taurus (Bovine).